We begin with the raw amino-acid sequence, 435 residues long: Serine hydroxymethyltransferase 2 (435 aa).

(6S)-5,6,7,8-tetrahydrofolate contacts are provided by residues L135 and 139 to 141 (GHL). N6-(pyridoxal phosphate)lysine is present on K244. E260 lines the (6S)-5,6,7,8-tetrahydrofolate pocket.

It belongs to the SHMT family. In terms of assembly, homodimer. Requires pyridoxal 5'-phosphate as cofactor.

The protein resides in the cytoplasm. The enzyme catalyses (6R)-5,10-methylene-5,6,7,8-tetrahydrofolate + glycine + H2O = (6S)-5,6,7,8-tetrahydrofolate + L-serine. It functions in the pathway one-carbon metabolism; tetrahydrofolate interconversion. It participates in amino-acid biosynthesis; glycine biosynthesis; glycine from L-serine: step 1/1. Functionally, catalyzes the reversible interconversion of serine and glycine with tetrahydrofolate (THF) serving as the one-carbon carrier. This reaction serves as the major source of one-carbon groups required for the biosynthesis of purines, thymidylate, methionine, and other important biomolecules. Also exhibits THF-independent aldolase activity toward beta-hydroxyamino acids, producing glycine and aldehydes, via a retro-aldol mechanism. The chain is Serine hydroxymethyltransferase 2 from Vibrio cholerae serotype O1 (strain ATCC 39315 / El Tor Inaba N16961).